The chain runs to 82 residues: Small ribosomal subunit protein eS21 (82 aa).

This sequence belongs to the eukaryotic ribosomal protein eS21 family.

The sequence is that of Small ribosomal subunit protein eS21 (RPS21) from Oryza sativa subsp. japonica (Rice).